We begin with the raw amino-acid sequence, 708 residues long: Glutamate--tRNA ligase, cytoplasmic (708 aa).

Interaction with ARC1 regions lie at residues 106–115 (NLRTFILGGL) and 141–157 (KVDV…EMDP). 205-207 (RFP) provides a ligand contact to L-glutamate. Residues 210 to 219 (PSGYLHIGHA) carry the 'HIGH' region motif. ATP is bound at residue H215. L-glutamate is bound at residue D241. At T300 the chain carries Phosphothreonine. L-glutamate-binding positions include 382–386 (YDFCV) and R400. Residues E403 and 437-441 (LLSKR) contribute to the ATP site. The 'KMSKS' region motif lies at 437 to 441 (LLSKR).

It belongs to the class-I aminoacyl-tRNA synthetase family. Glutamate--tRNA ligase type 2 subfamily. Component of a yeast aminoacyl-tRNA synthase (aaRS) complex formed by methionyl-tRNA synthase MES1, glutamyl-tRNA synthase GUS1 and the tRNA aminoacylation cofactor ARC1 in a stoichiometric complex. Interacts (via N-ter) with ARC1 (via N-ter). Can also form a stable binary complex with ARC1 that is functional in terms of aminoacylation. ARC1 increases the affinity for cognate tRNAs due to the presence of a tRNA binding domain in the middle and C-terminal part of ARC1.

The protein localises to the cytoplasm. The protein resides in the mitochondrion. It catalyses the reaction tRNA(Glu) + L-glutamate + ATP = L-glutamyl-tRNA(Glu) + AMP + diphosphate. Functionally, catalyzes the attachment of glutamate to tRNA(Glu) in a two-step reaction: glutamate is first activated by ATP to form Glu-AMP and then transferred to the acceptor end of tRNA(Glu). In mitochondria, constitutes the nondiscriminating glutamyl-tRNA synthase that generates the mitochondrial mischarged glutamyl-tRNA(Gln) substrate for the tRNA-dependent amidotransferase (AdT), which generates mitochondrial glutaminyl-tRNA(Gln) by transamidation of glutamyl-tRNA(Gln). This is Glutamate--tRNA ligase, cytoplasmic (GUS1) from Saccharomyces cerevisiae (strain ATCC 204508 / S288c) (Baker's yeast).